The following is a 208-amino-acid chain: FMRFamide-like neuropeptide 18 (208 aa).

An N-terminal signal peptide occupies residues 1-21 (MQRWSGVLLISLCCLLRGALA). Residues 22-83 (YTEPIYEIVE…VWEKRESSVQ (62 aa)) constitute a propeptide that is removed on maturation. The residue at position 93 (Phe93) is a Phenylalanine amide. Positions 97–101 (AYFDE) are excised as a propeptide. At Phe111 the chain carries Phenylalanine amide. Positions 115 to 119 (SYFDE) are excised as a propeptide. A Phenylalanine amide modification is found at Phe129. Residues 133–137 (DVPMD) constitute a propeptide that is removed on maturation. Phe147 is modified (phenylalanine amide). A propeptide spanning residues 151-158 (DYMADSFD) is cleaved from the precursor. Residues Phe169 and Phe180 each carry the phenylalanine amide modification. The propeptide occupies 184–195 (SDLEEHYAGVLL). Phe205 carries the post-translational modification Phenylalanine amide.

It belongs to the FARP (FMRFamide related peptide) family. Post-translationally, may be processed by convertase egl-3. In terms of tissue distribution, expressed in head neurons and weakly in ventral nerve cord. Expressed in the interneurons AVA, AIY and RIG, the motor neuron RIM and the pharyngeal neurons M2 and M3. EMPGVLRF-amide: Expressed in cholinergic pharyngeal motoneurons M2 and M3.

It localises to the secreted. Functionally, FMRFamide-like neuropeptides. Ligand to G-protein coupled receptor npr-1. Involved in modulating locomotion quiescence during the sleep-like state called lethargus which occurs during molting between larval and adult stages, acting via npr-1. Together with flp-1, plays a homeostatic role by acting on the GABAergic neural transmission at neuromuscular junctions to prevent overexcitation of the locomotor circuit. Plays a role in the navigational capacity of sperm and the targeting of sperm derived from males to the fertilization site in the uterus of hermaphrodites. In terms of biological role, SVPGVLRF-amide: Excites muscle tension. Activates the G-protein coupled receptor npr-1 more effectively than other flp-18 peptides. Inhibits the activity of dissected pharyngeal myogenic muscle system. This chain is FMRFamide-like neuropeptide 18, found in Caenorhabditis elegans.